The chain runs to 38 residues: Photosystem II reaction center protein L (38 aa).

Residues 17 to 37 (SLYWGLLLIFVLAILFSNYIF) form a helical membrane-spanning segment.

This sequence belongs to the PsbL family. As to quaternary structure, PSII is composed of 1 copy each of membrane proteins PsbA, PsbB, PsbC, PsbD, PsbE, PsbF, PsbH, PsbI, PsbJ, PsbK, PsbL, PsbM, PsbT, PsbX, PsbY, PsbZ, Psb30/Ycf12, at least 3 peripheral proteins of the oxygen-evolving complex and a large number of cofactors. It forms dimeric complexes.

Its subcellular location is the plastid. It localises to the chloroplast thylakoid membrane. Its function is as follows. One of the components of the core complex of photosystem II (PSII). PSII is a light-driven water:plastoquinone oxidoreductase that uses light energy to abstract electrons from H(2)O, generating O(2) and a proton gradient subsequently used for ATP formation. It consists of a core antenna complex that captures photons, and an electron transfer chain that converts photonic excitation into a charge separation. This subunit is found at the monomer-monomer interface and is required for correct PSII assembly and/or dimerization. This is Photosystem II reaction center protein L from Chlorokybus atmophyticus (Soil alga).